The sequence spans 401 residues: Chalcone synthase 2 (401 aa).

Cys168 is an active-site residue.

It belongs to the thiolase-like superfamily. Chalcone/stilbene synthases family.

It carries out the reaction (E)-4-coumaroyl-CoA + 3 malonyl-CoA + 3 H(+) = 2',4,4',6'-tetrahydroxychalcone + 3 CO2 + 4 CoA. The protein operates within secondary metabolite biosynthesis; flavonoid biosynthesis. Its function is as follows. The primary product of this enzyme is 4,2',4',6'-tetrahydroxychalcone (also termed naringenin-chalcone or chalcone) which can under specific conditions spontaneously isomerize into naringenin. The protein is Chalcone synthase 2 (CHS2) of Sorghum bicolor (Sorghum).